The following is a 469-amino-acid chain: 3-isopropylmalate dehydratase large subunit (469 aa).

Positions 350, 410, and 413 each coordinate [4Fe-4S] cluster.

This sequence belongs to the aconitase/IPM isomerase family. LeuC type 1 subfamily. In terms of assembly, heterodimer of LeuC and LeuD. [4Fe-4S] cluster is required as a cofactor.

It carries out the reaction (2R,3S)-3-isopropylmalate = (2S)-2-isopropylmalate. Its pathway is amino-acid biosynthesis; L-leucine biosynthesis; L-leucine from 3-methyl-2-oxobutanoate: step 2/4. Its function is as follows. Catalyzes the isomerization between 2-isopropylmalate and 3-isopropylmalate, via the formation of 2-isopropylmaleate. In Rhizobium rhizogenes (strain K84 / ATCC BAA-868) (Agrobacterium radiobacter), this protein is 3-isopropylmalate dehydratase large subunit.